The sequence spans 455 residues: Growth/differentiation factor 9 (455 aa).

A signal peptide spans 1–24; that stretch reads MALPNKFLLWFYCFAWLCFPVSLG. A propeptide spanning residues 25–320 is cleaved from the precursor; it reads SQASGGDAQI…GRSSHHRHRR (296 aa). Residues asparagine 106, asparagine 163, asparagine 236, asparagine 255, and asparagine 269 are each glycosylated (N-linked (GlcNAc...) asparagine). The interval 305–328 is disordered; the sequence is EDAAEDGRSSHHRHRRGQETVSSE. The N-linked (GlcNAc...) asparagine glycan is linked to asparagine 339. 3 cysteine pairs are disulfide-bonded: cysteine 354/cysteine 420, cysteine 383/cysteine 452, and cysteine 387/cysteine 454.

This sequence belongs to the TGF-beta family. In terms of assembly, homodimer or heterodimer (Potential). But, in contrast to other members of this family, cannot be disulfide-linked. Post-translationally, phosphorylated; phosphorylation is critical for GDF9 function.

It localises to the secreted. Its function is as follows. Required for ovarian folliculogenesis. The sequence is that of Growth/differentiation factor 9 (GDF9) from Papio anubis (Olive baboon).